Reading from the N-terminus, the 1218-residue chain is Protein jagged-1 (1218 aa).

The N-terminal stretch at 1–33 (MRSPRTRGRSGRPLSLLLALLCALRAKVCGASG) is a signal peptide. Over 34 to 1067 (QFELEILSMQ…QRRPLKNRTD (1034 aa)) the chain is Extracellular. An N-linked (GlcNAc...) asparagine glycan is attached at Asn-143. The DSL domain maps to 185–229 (VTCDDYYYGFGCNKFCRPRDDFFGHYACDQNGNKTCMEGWMGPEC). Cystine bridges form between Cys-187/Cys-196 and Cys-200/Cys-212. Residues 199-207 (FCRPRDDFF) are important for interaction with NOTCH1. Asn-217 carries an N-linked (GlcNAc...) asparagine glycan. Cystine bridges form between Cys-220-Cys-229, Cys-234-Cys-245, Cys-238-Cys-251, Cys-253-Cys-262, Cys-265-Cys-276, Cys-271-Cys-282, Cys-284-Cys-293, Cys-300-Cys-312, Cys-306-Cys-322, Cys-324-Cys-333, Cys-340-Cys-351, Cys-345-Cys-360, Cys-362-Cys-371, Cys-378-Cys-389, Cys-383-Cys-398, Cys-400-Cys-409, Cys-416-Cys-427, Cys-421-Cys-436, Cys-438-Cys-447, Cys-454-Cys-464, Cys-458-Cys-473, Cys-475-Cys-484, Cys-491-Cys-502, Cys-496-Cys-511, Cys-513-Cys-522, Cys-529-Cys-540, Cys-534-Cys-549, Cys-551-Cys-560, Cys-578-Cys-605, Cys-599-Cys-615, Cys-617-Cys-626, Cys-633-Cys-644, Cys-638-Cys-653, Cys-655-Cys-664, Cys-671-Cys-682, Cys-676-Cys-691, Cys-693-Cys-702, Cys-709-Cys-720, Cys-714-Cys-729, and Cys-731-Cys-740. An EGF-like 1 domain is found at 230–263 (NRAICRQGCSPKHGSCKLPGDCRCQYGWQGLYCD). The EGF-like 2; atypical domain maps to 264–294 (KCIPHPGCVHGICNEPWQCLCETNWGGQLCD). EGF-like domains are found at residues 296–334 (DLNYCGTHQPCLNGGTCSNTGPDKYQCSCPEGYSGPNCE) and 336–372 (AEHACLSDPCHNRGSCKETSLGFECECSPGWTGPTCS). Residues 374–410 (NIDDCSPNNCSHGGTCQDLVNGFKCVCPPQWTGKTCQ) form the EGF-like 5; calcium-binding domain. Asn-382 carries an N-linked (GlcNAc...) asparagine glycan. Positions 412 to 448 (DANECEAKPCVNAKSCKNLIASYYCDCLPGWMGQNCD) constitute an EGF-like 6; calcium-binding domain. Residues 450–485 (NINDCLGQCQNDASCRDLVNGYRCICPPGYAGDHCE) enclose the EGF-like 7; calcium-binding domain. An EGF-like 8; calcium-binding domain is found at 487-523 (DIDECASNPCLNGGHCQNEINRFQCLCPTGFSGNLCQ). EGF-like domains lie at 525 to 561 (DIDYCEPNPCQNGAQCYNRASDYFCKCPEDYEGKNCS) and 586 to 627 (DTPE…TYCH). Asn-559 carries an N-linked (GlcNAc...) asparagine glycan. In terms of domain architecture, EGF-like 11; calcium-binding spans 629 to 665 (NINDCESNPCRNGGTCIDGVNSYKCICSDGWEGAYCE). The 37-residue stretch at 667–703 (NINDCSQNPCHNGGTCRDLVNDFYCDCKNGWKGKTCH) folds into the EGF-like 12; calcium-binding domain. EGF-like domains follow at residues 705–741 (RDSQCDEATCNNGGTCYDEGDAFKCMCPGGWEGTTCN) and 744–780 (RNSSCLPNPCHNGGTCVVNGESFTCVCKEGWEGPICA). An N-linked (GlcNAc...) asparagine glycan is attached at Asn-745. Intrachain disulfides connect Cys-748–Cys-759, Cys-753–Cys-768, Cys-770–Cys-779, Cys-786–Cys-797, Cys-791–Cys-806, Cys-808–Cys-817, Cys-824–Cys-835, Cys-829–Cys-844, and Cys-846–Cys-855. Positions 782-818 (NTNDCSPHPCYNSGTCVDGDNWYRCECAPGFAGPDCR) constitute an EGF-like 15; calcium-binding domain. An EGF-like 16; calcium-binding domain is found at 820–856 (NINECQSSPCAFGATCVDEINGYRCVCPPGHSGAKCQ). N-linked (GlcNAc...) asparagine glycosylation is found at Asn-960, Asn-991, Asn-1045, and Asn-1064. Residues 1068–1093 (FLVPLLSSVLTVAWICCLVTAFYWCL) form a helical membrane-spanning segment. The Cytoplasmic portion of the chain corresponds to 1094–1218 (RKRRKPGSHT…QSLNRMEYIV (125 aa)). The disordered stretch occupies residues 1152–1218 (HNSEVEEDDM…QSLNRMEYIV (67 aa)). The segment covering 1189 to 1199 (TPTKHPNWTNK) has biased composition (polar residues).

Interacts with NOTCH2 and NOTCH3. Interacts with NOTCH1 (in the presence of calcium ions). Widely expressed in adult and fetal tissues. In cervix epithelium expressed in undifferentiated subcolumnar reserve cells and squamous metaplasia. Expression is up-regulated in cervical squamous cell carcinoma. Expressed in bone marrow cell line HS-27a which supports the long-term maintenance of immature progenitor cells.

It is found in the membrane. The protein localises to the cell membrane. Functionally, ligand for multiple Notch receptors and involved in the mediation of Notch signaling. May be involved in cell-fate decisions during hematopoiesis. Seems to be involved in early and late stages of mammalian cardiovascular development. Inhibits myoblast differentiation. Enhances fibroblast growth factor-induced angiogenesis (in vitro). The polypeptide is Protein jagged-1 (JAG1) (Homo sapiens (Human)).